Here is a 165-residue protein sequence, read N- to C-terminus: uncharacterized protein (165 aa).

Over residues 22 to 34 (QQANQENMSSRTD) the composition is skewed to polar residues. Positions 22-45 (QQANQENMSSRTDSPIPPFGESEQ) are disordered.

This is an uncharacterized protein from Homo sapiens (Human).